The sequence spans 489 residues: Glycogen synthase (489 aa).

Lysine 17 contributes to the ADP-alpha-D-glucose binding site.

Belongs to the glycosyltransferase 1 family. Bacterial/plant glycogen synthase subfamily.

The enzyme catalyses [(1-&gt;4)-alpha-D-glucosyl](n) + ADP-alpha-D-glucose = [(1-&gt;4)-alpha-D-glucosyl](n+1) + ADP + H(+). It functions in the pathway glycan biosynthesis; glycogen biosynthesis. In terms of biological role, synthesizes alpha-1,4-glucan chains using ADP-glucose. The chain is Glycogen synthase from Nitratidesulfovibrio vulgaris (strain ATCC 29579 / DSM 644 / CCUG 34227 / NCIMB 8303 / VKM B-1760 / Hildenborough) (Desulfovibrio vulgaris).